The following is a 2799-amino-acid chain: E3 ubiquitin-protein ligase UBR5 (2799 aa).

T2 is modified (N-acetylthreonine). Residues 77–88 (DRLELGKPDNND) are compositionally biased toward basic and acidic residues. Residues 77–175 (DRLELGKPDN…DRGSGLLGSQ (99 aa)) form a disordered region. The segment covering 89-110 (GSKLNSNSGAGRTSRPGRTSDS) has biased composition (polar residues). S110 bears the Phosphoserine mark. The segment covering 135–144 (GVGGSGGGSS) has biased composition (gly residues). A UBA domain is found at 184–226 (VIPEELISQAQVVLQGKSRSVIIRELQRTNLDVNLAVNNLLSR). S327 carries the post-translational modification Phosphoserine. Over residues 328-347 (FDNERGSTSKEGEPNLDKKN) the composition is skewed to basic and acidic residues. A disordered region spans residues 328–352 (FDNERGSTSKEGEPNLDKKNTPVQS). 2 positions are modified to phosphoserine: S352 and S578. The tract at residues 579 to 648 (PESLKNMEKA…APKEEEKVNE (70 aa)) is disordered. The span at 583 to 604 (KNMEKASKTTEAKPESKQEPVK) shows a compositional bias: basic and acidic residues. S612 bears the Phosphoserine mark. The span at 614-628 (ASTCSDASSIASSAS) shows a compositional bias: low complexity. T637 bears the Phosphothreonine mark. Phosphoserine is present on residues S808, S928, and S1018. 2 disordered regions span residues 999–1031 (AGLGRHEAGASSSDHQDPVSPPIAPPSWVPDPP) and 1052–1075 (TAATGTGQGPSTSTIPGPSTEPSV). Residues 1017–1031 (VSPPIAPPSWVPDPP) show a composition bias toward pro residues. A compositionally biased stretch (polar residues) spans 1052–1073 (TAATGTGQGPSTSTIPGPSTEP). 2 positions are modified to phosphothreonine: T1115 and T1135. The segment at 1177 to 1245 (DTCSFTWTGA…EKCKCKTLIA (69 aa)) adopts a UBR-type zinc-finger fold. Zn(2+) contacts are provided by C1179, C1196, C1199, C1208, C1211, C1215, H1216, and H1219. The residue at position 1227 (S1227) is a Phosphoserine. 3 residues coordinate Zn(2+): C1232, C1234, and C1240. Residues 1299 to 1318 (REDRNRKTASPEDSDMPDHD) form a disordered region. Residues S1308, S1355, S1375, and S1481 each carry the phosphoserine modification. The tract at residues 1515-1740 (SVEPLPPRPS…PSSTSTPAAS (226 aa)) is disordered. Residues 1524 to 1537 (SSDQSSSSSQSQSS) show a composition bias toward low complexity. Residues 1538–1553 (YIIRNPQQRRISQSQP) show a composition bias toward polar residues. S1549 carries the phosphoserine modification. Composition is skewed to acidic residues over residues 1559 to 1574 (EEQDDIVSADVEEVEV) and 1605 to 1614 (HDEDGSDMEL). The span at 1629–1638 (NHSNQDNASG) shows a compositional bias: polar residues. Low complexity-rich tracts occupy residues 1641-1657 (SVVTAATAGSEAGASSV), 1668-1681 (SNDSSDSDSSSSQS), and 1726-1740 (AASTAPSSTSTPAAS). The residue at position 1736 (T1736) is a Phosphothreonine. S1741 bears the Phosphoserine mark. Position 1746 is a phosphotyrosine (Y1746). S1780 carries the post-translational modification Phosphoserine. A disordered region spans residues 1859 to 1890 (LASAGDPGHPNHPLHASQNSARRERMTAREEA). Basic and acidic residues predominate over residues 1879–1890 (ARRERMTAREEA). Residue T1969 is modified to Phosphothreonine. Residues 1984–2021 (GIDNEDSEHENDDDTNQSATLNDKDDDSLPAETGQNHP) form a disordered region. Positions 1985–1998 (IDNEDSEHENDDDT) are enriched in acidic residues. Phosphoserine occurs at positions 1990, 2026, and 2028. At T2030 the chain carries Phosphothreonine. At S2076 the chain carries Phosphoserine. The interval 2117–2142 (RQKKEGEEQPVLPEETESSKPGPSAH) is disordered. T2213 carries the phosphothreonine modification. A phosphoserine mark is found at S2241 and S2289. Positions 2323–2392 (HTSLMQRLRN…PSDDPEPLPA (70 aa)) are disordered. Composition is skewed to basic and acidic residues over residues 2332 to 2348 (NRGERDREREREREMRR) and 2356 to 2368 (SRRDRDRDFRRQL). The 78-residue stretch at 2377–2454 (PASEGNPSDD…AMELIIAHGR (78 aa)) folds into the PABC domain. An HECT domain is found at 2462–2799 (LDLGLVDSSE…AIKTKNFGFV (338 aa)). 3 positions are modified to phosphoserine: S2469, S2484, and S2486. The segment at 2473–2493 (VQQENRKRHGSSRSVVDMDLD) is disordered. Residue C2768 is the Glycyl thioester intermediate of the active site.

It belongs to the UBR5 family. Homotetramer; composed of a dimer of dimers. Associates with CDK9 and TFIIS/TCEA1 and forms a transcription regulatory complex made of CDK9, RNAP II, UBR5 and TFIIS/TCEA1 that can stimulate target gene transcription (e.g. gamma fibrinogen/FGG) by recruiting their promoters. Associates with the E3 ligase complex containing DYRK2, EDD/UBR5, DDB1 and DCAF1 proteins (EDVP complex). Binds TOPBP1. Interacts with PIH1D1. Interacts with CIB1. In terms of assembly, (Microbial infection) Interacts with human T-cell leukemia virus 1/HTLV-1 protein HBZ; this interaction modulates HBZ stability. Widely expressed. Most abundant in testis and expressed at high levels in brain, pituitary and kidney.

It is found in the nucleus. The protein resides in the cytoplasm. It catalyses the reaction S-ubiquitinyl-[E2 ubiquitin-conjugating enzyme]-L-cysteine + [acceptor protein]-L-lysine = [E2 ubiquitin-conjugating enzyme]-L-cysteine + N(6)-ubiquitinyl-[acceptor protein]-L-lysine.. The protein operates within protein modification; protein ubiquitination. E3 ubiquitin-protein ligase involved in different protein quality control pathways in the cytoplasm and nucleus. Mainly acts as a ubiquitin chain elongator that extends pre-ubiquitinated substrates. Component of the N-end rule pathway: ubiquitinates proteins bearing specific N-terminal residues that are destabilizing according to the N-end rule, leading to their degradation. Recognizes type-1 N-degrons, containing positively charged amino acids (Arg, Lys and His). Together with UBR4, part of a cytoplasm protein quality control pathway that prevents protein aggregation by catalyzing assembly of heterotypic 'Lys-11'-/'Lys-48'-linked branched ubiquitin chains on aggregated proteins, leading to substrate recognition by the segregase p97/VCP and degradation by the proteasome: UBR5 is probably branching multiple 'Lys-48'-linked chains of substrates initially modified with mixed conjugates by UBR4. Together with ITCH, catalyzes 'Lys-48'-/'Lys-63'-branched ubiquitination of TXNIP, leading to its degradation: UBR5 mediates branching of 'Lys-48'-linked chains of substrates initially modified with 'Lys-63'-linked conjugates by ITCH. Catalytic component of a nuclear protein quality control pathway that mediates ubiquitination and degradation of unpaired transcription factors (i.e. transcription factors that are not assembled into functional multiprotein complexes): specifically recognizes and binds degrons that are not accessible when transcription regulators are associated with their coactivators. Ubiquitinates various unpaired transcription regulator (MYC, SUPT4H1, SUPT5H, CDC20 and MCRS1), as well as ligand-bound nuclear receptors (ESR1, NR1H3, NR3C1, PGR, RARA, RXRA AND VDR) that are not associated with their nuclear receptor coactivators (NCOAs). Involved in maturation and/or transcriptional regulation of mRNA by mediating polyubiquitination and activation of CDK9. Also acts as a regulator of DNA damage response by acting as a suppressor of RNF168, an E3 ubiquitin-protein ligase that promotes accumulation of 'Lys-63'-linked histone H2A and H2AX at DNA damage sites, thereby acting as a guard against excessive spreading of ubiquitinated chromatin at damaged chromosomes. Regulates DNA topoisomerase II binding protein (TopBP1) in the DNA damage response. Ubiquitinates acetylated PCK1. Acts as a positive regulator of the canonical Wnt signaling pathway by mediating (1) ubiquitination and stabilization of CTNNB1, and (2) 'Lys-48'-linked ubiquitination and degradation of TLE3. Promotes disassembly of the mitotic checkpoint complex (MCC) from the APC/C complex by catalyzing ubiquitination of BUB1B, BUB3 and CDC20. Plays an essential role in extraembryonic development. Required for the maintenance of skeletal tissue homeostasis by acting as an inhibitor of hedgehog (HH) signaling. The chain is E3 ubiquitin-protein ligase UBR5 (UBR5) from Homo sapiens (Human).